Here is a 470-residue protein sequence, read N- to C-terminus: ATP synthase subunit beta (470 aa).

ATP is bound at residue 148 to 155; it reads GGAGVGKT.

Belongs to the ATPase alpha/beta chains family. F-type ATPases have 2 components, CF(1) - the catalytic core - and CF(0) - the membrane proton channel. CF(1) has five subunits: alpha(3), beta(3), gamma(1), delta(1), epsilon(1). CF(0) has three main subunits: a(1), b(2) and c(9-12). The alpha and beta chains form an alternating ring which encloses part of the gamma chain. CF(1) is attached to CF(0) by a central stalk formed by the gamma and epsilon chains, while a peripheral stalk is formed by the delta and b chains.

It is found in the cell inner membrane. The catalysed reaction is ATP + H2O + 4 H(+)(in) = ADP + phosphate + 5 H(+)(out). Produces ATP from ADP in the presence of a proton gradient across the membrane. The catalytic sites are hosted primarily by the beta subunits. In Saccharophagus degradans (strain 2-40 / ATCC 43961 / DSM 17024), this protein is ATP synthase subunit beta.